The sequence spans 282 residues: Probable endonuclease 4 (282 aa).

Residues histidine 66, histidine 106, glutamate 143, aspartate 177, histidine 180, histidine 214, aspartate 227, histidine 229, and glutamate 259 each coordinate Zn(2+).

The protein belongs to the AP endonuclease 2 family. It depends on Zn(2+) as a cofactor.

The enzyme catalyses Endonucleolytic cleavage to 5'-phosphooligonucleotide end-products.. In terms of biological role, endonuclease IV plays a role in DNA repair. It cleaves phosphodiester bonds at apurinic or apyrimidinic (AP) sites, generating a 3'-hydroxyl group and a 5'-terminal sugar phosphate. This chain is Probable endonuclease 4, found in Nitratidesulfovibrio vulgaris (strain ATCC 29579 / DSM 644 / CCUG 34227 / NCIMB 8303 / VKM B-1760 / Hildenborough) (Desulfovibrio vulgaris).